The following is a 902-amino-acid chain: Probable dipeptidyl-aminopeptidase B (902 aa).

Disordered stretches follow at residues 1-23 and 53-72; these read MTRR…LSVD and DAEA…KLGS. Residues 1-78 lie on the Cytoplasmic side of the membrane; that stretch reads MTRRRSTSGT…KLGSGSRTRQ (78 aa). Positions 7–21 are enriched in low complexity; it reads TSGTSSRSSTDSGLS. The helical; Signal-anchor for type II membrane protein transmembrane segment at 79 to 99 threads the bilayer; it reads IFWALVILCLGGWVLALVLFL. Over 100–902 the chain is Vacuolar; sequence THGRASSQTA…VKRSVPAFAH (803 aa). N-linked (GlcNAc...) asparagine glycosylation is found at N335 and N626. Catalysis depends on S740, which acts as the Charge relay system. 2 N-linked (GlcNAc...) asparagine glycosylation sites follow: N794 and N799. Catalysis depends on charge relay system residues D817 and H850.

It belongs to the peptidase S9B family.

The protein localises to the vacuole membrane. It catalyses the reaction Release of an N-terminal dipeptide, Xaa-Yaa-|-Zaa-, from a polypeptide, preferentially when Yaa is Pro, provided Zaa is neither Pro nor hydroxyproline.. In terms of biological role, type IV dipeptidyl-peptidase which removes N-terminal dipeptides sequentially from polypeptides having unsubstituted N-termini provided that the penultimate residue is proline. This chain is Probable dipeptidyl-aminopeptidase B (dapB), found in Aspergillus oryzae (strain ATCC 42149 / RIB 40) (Yellow koji mold).